Here is a 387-residue protein sequence, read N- to C-terminus: MEQVVIVDAIRTPMGRSKGGAFRNVRAEDLSAHLMRSLLARNPALEAAALDDIYWGCVQQTLEQGFNIARNAALLAEVPHSVPAVTVNRLCGSSMQALHDAARMIMTGDAQACLVGGVEHIGHVPMSHGVDFHPGLSRNVAKAAGMMGLTAEMLARMHGISREMQDAFAARSHARAWAATQSAAFKNEIIPTGGHDADGVLKQFNYDEVIRPETTVEALATLRPAFDPVNGTVTAGTSSALSDGAAAMLVMSESRAHELGLKPRARVRSMAVVGCDPSIMGYGPVPASKLALKKAGLSASDIGVFEMNEAFAAQILPCIKDLGLMEQIDEKINLNGGAIALGHPLGCSGARISTTLLNLMERKDVQFGLATMCIGLGQGIATVFERV.

The active-site Acyl-thioester intermediate is Cys-91. Residues His-343 and Cys-373 each act as proton acceptor in the active site.

The protein belongs to the thiolase-like superfamily. Thiolase family. In terms of assembly, heterotetramer of two alpha chains (FadB) and two beta chains (FadA).

It localises to the cytoplasm. The enzyme catalyses an acyl-CoA + acetyl-CoA = a 3-oxoacyl-CoA + CoA. The protein operates within lipid metabolism; fatty acid beta-oxidation. Catalyzes the final step of fatty acid oxidation in which acetyl-CoA is released and the CoA ester of a fatty acid two carbons shorter is formed. The sequence is that of 3-ketoacyl-CoA thiolase from Shigella flexneri serotype 5b (strain 8401).